A 378-amino-acid chain; its full sequence is Flap endonuclease 1 (378 aa).

The interval 1-102 is N-domain; that stretch reads MGIHGLAKLI…GELAKRSERR (102 aa). Arg19 is modified (symmetric dimethylarginine; by PRMT5). Asp34 contacts Mg(2+). DNA-binding residues include Arg47 and Arg69. N6-acetyllysine is present on Lys78. Asp84 contacts Mg(2+). Arg98 and Arg102 each carry symmetric dimethylarginine; by PRMT5. Residues 120–251 are I-domain; it reads EVEKFTKRLV…KRAVDLIQKH (132 aa). The Mg(2+) site is built by Glu156, Glu158, Asp177, and Asp179. Glu156 lines the DNA pocket. Ser185 carries the phosphoserine; by CDK2 modification. At Arg190 the chain carries Symmetric dimethylarginine; by PRMT5. A Phosphoserine modification is found at Ser195. DNA contacts are provided by Gly229 and Asp231. Residue Asp231 coordinates Mg(2+). Ser253, Ser291, and Ser333 each carry phosphoserine. Positions 325-378 are disordered; the sequence is RLSKSRQGSTQGRLDDFFKVTGSLSSAKRKEPEPKGPAKKKAKTGGAGKFRRGK. The residue at position 334 (Thr334) is a Phosphothreonine. The segment at 334 to 342 is interaction with PCNA; it reads TQGRLDDFF. An N6-acetyllysine mark is found at Lys352, Lys373, and Lys378. Basic residues predominate over residues 361–378; it reads PAKKKAKTGGAGKFRRGK.

This sequence belongs to the XPG/RAD2 endonuclease family. FEN1 subfamily. Interacts with PCNA. Three molecules of FEN1 bind to one PCNA trimer with each molecule binding to one PCNA monomer. PCNA stimulates the nuclease activity without altering cleavage specificity. The C-terminal domain binds EP300; can bind simultaneously to both PCNA and EP300. Interacts with DDX11; this interaction is direct and increases flap endonuclease activity of FEN1. Interacts with WDR4; regulating its endonuclease activity. Interacts with POLB. Requires Mg(2+) as cofactor. In terms of processing, acetylated by EP300. Acetylation inhibits both endonuclease and exonuclease activity. Acetylation also reduces DNA-binding activity but does not affect interaction with PCNA or EP300. Phosphorylation upon DNA damage induces relocalization to the nuclear plasma. Phosphorylation at Ser-185 by CDK2 occurs during late S-phase and results in dissociation from PCNA. Post-translationally, methylation at Arg-190 by PRMT5 impedes Ser-185 phosphorylation and increases interaction with PCNA.

The protein localises to the nucleus. It is found in the nucleolus. Its subcellular location is the nucleoplasm. The protein resides in the mitochondrion. In terms of biological role, structure-specific nuclease with 5'-flap endonuclease and 5'-3' exonuclease activities involved in DNA replication and repair. During DNA replication, cleaves the 5'-overhanging flap structure that is generated by displacement synthesis when DNA polymerase encounters the 5'-end of a downstream Okazaki fragment. It enters the flap from the 5'-end and then tracks to cleave the flap base, leaving a nick for ligation. Also involved in the long patch base excision repair (LP-BER) pathway, by cleaving within the apurinic/apyrimidinic (AP) site-terminated flap. Acts as a genome stabilization factor that prevents flaps from equilibrating into structures that lead to duplications and deletions. Also possesses 5'-3' exonuclease activity on nicked or gapped double-stranded DNA, and exhibits RNase H activity. Also involved in replication and repair of rDNA and in repairing mitochondrial DNA. The polypeptide is Flap endonuclease 1 (Mus musculus (Mouse)).